Reading from the N-terminus, the 1015-residue chain is GTPase-activating Rap/Ran-GAP domain-like protein 3 (1015 aa).

Positions 200 to 416 (LLVLEEQEGS…RTLDMLIRSL (217 aa)) constitute a Rap-GAP domain. Residues 498–812 (PYDIVCGDSW…QLTASRSDIY (315 aa)) form the CNH domain. 2 disordered regions span residues 821-842 (SASNCSSRDTSSQSSPQTPTGY) and 924-1004 (ELLG…FTFS). A compositionally biased stretch (low complexity) spans 823 to 835 (SNCSSRDTSSQSS). Residues 949 to 959 (KNKEEEQKRTA) show a composition bias toward basic and acidic residues.

Belongs to the GARNL3 family.

This is GTPase-activating Rap/Ran-GAP domain-like protein 3 (garnl3) from Danio rerio (Zebrafish).